A 175-amino-acid chain; its full sequence is Translation initiation factor IF-3 (175 aa).

This sequence belongs to the IF-3 family. In terms of assembly, monomer.

The protein localises to the cytoplasm. Functionally, IF-3 binds to the 30S ribosomal subunit and shifts the equilibrium between 70S ribosomes and their 50S and 30S subunits in favor of the free subunits, thus enhancing the availability of 30S subunits on which protein synthesis initiation begins. This Staphylococcus carnosus (strain TM300) protein is Translation initiation factor IF-3.